A 278-amino-acid chain; its full sequence is UPF0276 protein Swit_4400 (278 aa).

The protein belongs to the UPF0276 family.

The protein is UPF0276 protein Swit_4400 of Rhizorhabdus wittichii (strain DSM 6014 / CCUG 31198 / JCM 15750 / NBRC 105917 / EY 4224 / RW1) (Sphingomonas wittichii).